Reading from the N-terminus, the 311-residue chain is Protein nfe2 (311 aa).

Its function is as follows. Responsible for the nodulation efficiency and competitive ability of strain GR4 on alfalfa roots. This Rhizobium meliloti (Ensifer meliloti) protein is Protein nfe2 (nfe2).